The chain runs to 228 residues: Ribose-5-phosphate isomerase A (228 aa).

Substrate is bound by residues 32–35 (TGST), 85–88 (DGAD), and 98–101 (KGGG). The active-site Proton acceptor is the Glu107. Lys125 lines the substrate pocket.

Belongs to the ribose 5-phosphate isomerase family. In terms of assembly, homodimer.

It catalyses the reaction aldehydo-D-ribose 5-phosphate = D-ribulose 5-phosphate. It functions in the pathway carbohydrate degradation; pentose phosphate pathway; D-ribose 5-phosphate from D-ribulose 5-phosphate (non-oxidative stage): step 1/1. Functionally, catalyzes the reversible conversion of ribose-5-phosphate to ribulose 5-phosphate. The sequence is that of Ribose-5-phosphate isomerase A from Cupriavidus taiwanensis (strain DSM 17343 / BCRC 17206 / CCUG 44338 / CIP 107171 / LMG 19424 / R1) (Ralstonia taiwanensis (strain LMG 19424)).